The following is a 74-amino-acid chain: ATP synthase subunit c (74 aa).

2 helical membrane-spanning segments follow: residues 9 to 29 and 54 to 74; these read IGAG…GNIF and FALT…ILFV.

Belongs to the ATPase C chain family. F-type ATPases have 2 components, F(1) - the catalytic core - and F(0) - the membrane proton channel. F(1) has five subunits: alpha(3), beta(3), gamma(1), delta(1), epsilon(1). F(0) has three main subunits: a(1), b(2) and c(10-14). The alpha and beta chains form an alternating ring which encloses part of the gamma chain. F(1) is attached to F(0) by a central stalk formed by the gamma and epsilon chains, while a peripheral stalk is formed by the delta and b chains.

The protein localises to the cell inner membrane. Its function is as follows. F(1)F(0) ATP synthase produces ATP from ADP in the presence of a proton or sodium gradient. F-type ATPases consist of two structural domains, F(1) containing the extramembraneous catalytic core and F(0) containing the membrane proton channel, linked together by a central stalk and a peripheral stalk. During catalysis, ATP synthesis in the catalytic domain of F(1) is coupled via a rotary mechanism of the central stalk subunits to proton translocation. Key component of the F(0) channel; it plays a direct role in translocation across the membrane. A homomeric c-ring of between 10-14 subunits forms the central stalk rotor element with the F(1) delta and epsilon subunits. The chain is ATP synthase subunit c from Gluconacetobacter diazotrophicus (strain ATCC 49037 / DSM 5601 / CCUG 37298 / CIP 103539 / LMG 7603 / PAl5).